Reading from the N-terminus, the 143-residue chain is 3-hydroxyacyl-[acyl-carrier-protein] dehydratase FabZ (143 aa).

Residue His-49 is part of the active site.

The protein belongs to the thioester dehydratase family. FabZ subfamily.

The protein localises to the cytoplasm. The catalysed reaction is a (3R)-hydroxyacyl-[ACP] = a (2E)-enoyl-[ACP] + H2O. Functionally, involved in unsaturated fatty acids biosynthesis. Catalyzes the dehydration of short chain beta-hydroxyacyl-ACPs and long chain saturated and unsaturated beta-hydroxyacyl-ACPs. This Ehrlichia chaffeensis (strain ATCC CRL-10679 / Arkansas) protein is 3-hydroxyacyl-[acyl-carrier-protein] dehydratase FabZ.